Here is an 875-residue protein sequence, read N- to C-terminus: MSTTSIESNNDIGRSVKTIGVYSIGPEIGKGSFATVYKCFNTKTNESVAIKSVVRSKLKSKKLVENLEIEISILKTMKHPHIVGLLDYKQTTSHFHLVMDYCSMGDLSYFIRKRNQLIKTHPVISSLLERYPSPEGSHGLNEVLVIHFLKQLVSALEFLRNKSLVHRDIKPQNLLLCPPLHSKQEFKDGGFVGLWELPLLKIADFGFARFLPSTSMAETLCGSPLYMAPEILRYEKYNAKADLWSVGAVLYEMTVGKPPFRADNHVQLLKNIEKSNDRIKFPSAAQVPESLKRLIRSLLKYNPTERVSFNEFFNDPLIVNDLEGNDEPLETSEMDENLFISEYISPIKSSQKSQYIEPITTEVAVKEKSKQDLPAREVSTHASESQTKAVDTRPSSRDEEIKEIINKNSPGPETSRSIQPHNLKEKSLVLKNKDNDIILERDYVVVEKRAVEVNAIADELAHAGSGAVAINPRRTSSGSDNSYNGPNNMQLYRRPSLRSNSSGSQRRPSFTDRRISISISPTNALTKAIGLASNRLFGVNASGSPTNRLIEETDERLAINENNSSMNATNNTFSTILSNPNFANNLLIQKLNLPTSATVANNSQTNTSPQLSPQSKTDESVLNRLESLATKAHAINLFADVKFSQLIPSPPSSDALDDDLLHQNDMLPPKIVKSISEEGVVLYVKTLSLLAKGMVIASDWWYSQFEIDDPSNKNSNENPLKQSSNNNSDDLSLAVRINELVQWIREKFNECLEKAEFIRLTLQEANTLLSNEDSSEYMGNSNSVADKTRVVAEKLIFDRALEMSRNAAVNELVKEDLKGCELAYSTAIWMLEALLDEDSSNDEDRLDDEDKAMVEKFIVSIGNRLSVLKRKLEVV.

The 297-residue stretch at 22–318 folds into the Protein kinase domain; it reads YSIGPEIGKG…FNEFFNDPLI (297 aa). ATP contacts are provided by residues 28–36 and K51; that span reads IGKGSFATV. The Proton acceptor role is filled by D168. The span at 367–379 shows a compositional bias: basic and acidic residues; the sequence is EKSKQDLPAREVS. Disordered regions lie at residues 367–422 and 470–515; these read EKSK…QPHN and INPR…DRRI. Over residues 380 to 389 the composition is skewed to polar residues; sequence THASESQTKA. The segment covering 390–405 has biased composition (basic and acidic residues); the sequence is VDTRPSSRDEEIKEII. Polar residues-rich tracts occupy residues 406-420, 473-490, and 497-508; these read NKNS…SIQP, RRTS…NNMQ, and LRSNSSGSQRRP.

This sequence belongs to the protein kinase superfamily. Ser/Thr protein kinase family. APG1/unc-51/ULK1 subfamily. Homodimer. Forms a ternary complex with ATG13 and ATG17.

The protein localises to the cytoplasm. It localises to the preautophagosomal structure membrane. It carries out the reaction L-seryl-[protein] + ATP = O-phospho-L-seryl-[protein] + ADP + H(+). It catalyses the reaction L-threonyl-[protein] + ATP = O-phospho-L-threonyl-[protein] + ADP + H(+). Functionally, serine/threonine protein kinase involved in the cytoplasm to vacuole transport (Cvt) and found to be essential in autophagy, where it is required for the formation of autophagosomes. Involved in the clearance of protein aggregates which cannot be efficiently cleared by the proteasome. Required for selective autophagic degradation of the nucleus (nucleophagy) as well as for mitophagy which contributes to regulate mitochondrial quantity and quality by eliminating the mitochondria to a basal level to fulfill cellular energy requirements and preventing excess ROS production. Also involved in endoplasmic reticulum-specific autophagic process, in selective removal of ER-associated degradation (ERAD) substrates. Plays a key role in ATG9 and ATG23 cycling through the pre-autophagosomal structure and is necessary to promote ATG18 binding to ATG9 through phosphorylation of ATG9. Catalyzes phosphorylation of ATG4, decreasing the interaction between ATG4 and ATG8 and impairing deconjugation of PE-conjugated forms of ATG8. The chain is Serine/threonine-protein kinase ATG1 from Debaryomyces hansenii (strain ATCC 36239 / CBS 767 / BCRC 21394 / JCM 1990 / NBRC 0083 / IGC 2968) (Yeast).